Consider the following 382-residue polypeptide: Anhydro-N-acetylmuramic acid kinase (382 aa).

9–16 (GTSLDGID) is an ATP binding site.

The protein belongs to the anhydro-N-acetylmuramic acid kinase family.

The enzyme catalyses 1,6-anhydro-N-acetyl-beta-muramate + ATP + H2O = N-acetyl-D-muramate 6-phosphate + ADP + H(+). The protein operates within amino-sugar metabolism; 1,6-anhydro-N-acetylmuramate degradation. It participates in cell wall biogenesis; peptidoglycan recycling. Catalyzes the specific phosphorylation of 1,6-anhydro-N-acetylmuramic acid (anhMurNAc) with the simultaneous cleavage of the 1,6-anhydro ring, generating MurNAc-6-P. Is required for the utilization of anhMurNAc either imported from the medium or derived from its own cell wall murein, and thus plays a role in cell wall recycling. This is Anhydro-N-acetylmuramic acid kinase from Bacillus anthracis (strain A0248).